The sequence spans 343 residues: Beta-ketoacyl-[acyl-carrier-protein] synthase III 1 (343 aa).

Catalysis depends on residues cysteine 122 and histidine 268. The interval 269-273 (QANVR) is ACP-binding. Asparagine 299 is an active-site residue.

Belongs to the thiolase-like superfamily. FabH family. Homodimer.

The protein resides in the cytoplasm. It carries out the reaction malonyl-[ACP] + acetyl-CoA + H(+) = 3-oxobutanoyl-[ACP] + CO2 + CoA. The protein operates within lipid metabolism; fatty acid biosynthesis. Functionally, essential enzyme that catalyzes the condensation reaction of fatty acid synthesis by the addition to an acyl acceptor of two carbons from malonyl-ACP. Catalyzes the first condensation reaction which initiates fatty acid synthesis and may therefore play a role in governing the total rate of fatty acid production. Possesses both acetoacetyl-ACP synthase and acetyl transacylase activities. Its substrate specificity determines the biosynthesis of branched-chain of fatty acids. The chain is Beta-ketoacyl-[acyl-carrier-protein] synthase III 1 from Streptomyces coelicolor (strain ATCC BAA-471 / A3(2) / M145).